The sequence spans 403 residues: MGRAKKVVLAYSGGVDTSVCIPYLKQEWGVEEVITFAADLGQGDELEPIRQKALDAGASQSLVGDLIQPFIEDFAFPAIRANALYEGRYPLSTALARPLIAKRLVEVAREVGADAVAHGCTGKGNDQVRFDVAIASLAPDLKVLTPAREWGMSREETIAYGERFGMPSPVSKKSPYSIDLNLLGRSIEAGPLEDPMVAPPEEVFAMTRSITDAPDAFEEIEIRFESGNPVAINGQSLDPVAMIREANRLAGTHGIGRLDMIENRVVGIKSREIYETPGLLLLIQAHQELESLTLAADVLRSKRQLEMQWSDLVYQGLWFGPLKEALDGFMDRTQEHVNGVVRLRLHKGNATVIGRGSSDSSLYVPEMASYGSEDQFDHRAAEGFIYVWGLPIRLWAASKRSSR.

Residues 10 to 18 (AYSGGVDTS) and Ala38 each bind ATP. L-citrulline is bound at residue Tyr89. Gly119 contacts ATP. L-aspartate is bound by residues Thr121, Asn125, and Asp126. Asn125 lines the L-citrulline pocket. Residues Arg129, Ser177, Ser186, Glu262, and Tyr274 each coordinate L-citrulline.

This sequence belongs to the argininosuccinate synthase family. Type 1 subfamily. Homotetramer.

It localises to the cytoplasm. It carries out the reaction L-citrulline + L-aspartate + ATP = 2-(N(omega)-L-arginino)succinate + AMP + diphosphate + H(+). It functions in the pathway amino-acid biosynthesis; L-arginine biosynthesis; L-arginine from L-ornithine and carbamoyl phosphate: step 2/3. In Synechococcus sp. (strain CC9902), this protein is Argininosuccinate synthase.